Consider the following 423-residue polypeptide: Putative competence-damage inducible protein (423 aa).

This sequence belongs to the CinA family.

In Streptococcus pyogenes serotype M4 (strain MGAS10750), this protein is Putative competence-damage inducible protein.